Reading from the N-terminus, the 229-residue chain is 23 kDa piroplasm membrane protein (229 aa).

A signal peptide spans 1-19; the sequence is MNKYFKVFFFVLLTHALKS. The Extracellular segment spans residues 20–203; the sequence is ALIFGQATLQ…EKEDTNKKKY (184 aa). The helical transmembrane segment at 204 to 224 threads the bilayer; it reads VLMVVVVVVFVVVASLVVFLV. The Cytoplasmic segment spans residues 225 to 229; it reads KFCLK.

The protein localises to the membrane. The protein is 23 kDa piroplasm membrane protein of Theileria parva (East coast fever infection agent).